Reading from the N-terminus, the 201-residue chain is TATA-box-binding protein 2 (201 aa).

Tandem repeats lie at residues 26–102 and 116–193.

Belongs to the TBP family. As to quaternary structure, belongs to the TFIID complex together with the TBP-associated factors (TAFs). Binds DNA as monomer.

The protein localises to the nucleus. General transcription factor that functions at the core of the DNA-binding multiprotein factor TFIID. Binding of TFIID to the TATA box is the initial transcriptional step of the pre-initiation complex (PIC), playing a role in the activation of eukaryotic genes transcribed by RNA polymerase II. The chain is TATA-box-binding protein 2 (TBP2) from Triticum aestivum (Wheat).